Reading from the N-terminus, the 112-residue chain is Ig kappa chain V-II region 2S1.3 (112 aa).

The interval 1-23 (DIVMTQAAFSNPVTLGTSASFSC) is framework-1. A disulfide bridge connects residues cysteine 23 and cysteine 93. The interval 24–39 (RSSKSLQQSKGITYLY) is complementarity-determining-1. The framework-2 stretch occupies residues 40–54 (WYLQKPGQSPQLLIY). A complementarity-determining-2 region spans residues 55 to 61 (QMSNLAS). Residues 62-93 (GVPDRFSGSGSGTDFTLRISRVEAEDVGVYYC) are framework-3. The interval 94–102 (ANLQELPYT) is complementarity-determining-3. Residues 103–112 (FGGGTKLEIK) form a framework-4 region.

The polypeptide is Ig kappa chain V-II region 2S1.3 (Mus musculus (Mouse)).